An 821-amino-acid chain; its full sequence is Phenylalanine--tRNA ligase beta subunit (821 aa).

One can recognise a tRNA-binding domain in the interval Ser39–Gly149. The B5 domain occupies Leu414–Leu507. Mg(2+) is bound by residues Asp485, Asp491, Glu494, and Glu495. The 94-residue stretch at Pro727–Arg820 folds into the FDX-ACB domain.

The protein belongs to the phenylalanyl-tRNA synthetase beta subunit family. Type 1 subfamily. In terms of assembly, tetramer of two alpha and two beta subunits. Mg(2+) serves as cofactor.

The protein localises to the cytoplasm. The catalysed reaction is tRNA(Phe) + L-phenylalanine + ATP = L-phenylalanyl-tRNA(Phe) + AMP + diphosphate + H(+). The polypeptide is Phenylalanine--tRNA ligase beta subunit (Prochlorococcus marinus subsp. pastoris (strain CCMP1986 / NIES-2087 / MED4)).